The chain runs to 476 residues: Efflux pump atB (476 aa).

The tract at residues 1–38 (MAPQLAGSSHSSSASDQAHRQSSDPALESGSDTHVGSI) is disordered. Transmembrane regions (helical) follow at residues 69–89 (LIVA…LAPL), 96–116 (KPVY…CAVA), 127–147 (FFNG…VGDL), 186–206 (WSFY…SLLV), 264–284 (LLLC…FGAF), 294–314 (FNLW…IIGI), 347–367 (LPPA…FAWT), 372–392 (VHWI…IMIF), 403–425 (YPLY…AAAF), and 440–460 (WAGF…YIFY).

It belongs to the major facilitator superfamily.

Its subcellular location is the cell membrane. Its function is as follows. Efflux pump that might be required for efficient secretion of terreic acid. This chain is Efflux pump atB, found in Aspergillus terreus (strain NIH 2624 / FGSC A1156).